The chain runs to 297 residues: N-acetylmuramic acid 6-phosphate etherase (297 aa).

The 164-residue stretch at A55–K218 folds into the SIS domain. The active-site Proton donor is the E83. E114 is a catalytic residue.

Belongs to the GCKR-like family. MurNAc-6-P etherase subfamily. Homodimer.

It carries out the reaction N-acetyl-D-muramate 6-phosphate + H2O = N-acetyl-D-glucosamine 6-phosphate + (R)-lactate. It functions in the pathway amino-sugar metabolism; 1,6-anhydro-N-acetylmuramate degradation. The protein operates within amino-sugar metabolism; N-acetylmuramate degradation. Its pathway is cell wall biogenesis; peptidoglycan recycling. In terms of biological role, specifically catalyzes the cleavage of the D-lactyl ether substituent of MurNAc 6-phosphate, producing GlcNAc 6-phosphate and D-lactate. Together with AnmK, is also required for the utilization of anhydro-N-acetylmuramic acid (anhMurNAc) either imported from the medium or derived from its own cell wall murein, and thus plays a role in cell wall recycling. The chain is N-acetylmuramic acid 6-phosphate etherase from Cronobacter sakazakii (strain ATCC BAA-894) (Enterobacter sakazakii).